A 345-amino-acid chain; its full sequence is MTQTLVNNAYGKEISMTVIGAGSYGTSLAISLSRNGANVVLWGHEPEHMAKLEADRANHEFLPGIEFPPSLIVESDLAKAVQASRDLLVVVPSHVFGIVLNSLKPYLRDDSRICWATKGLEPETGRLLKDVAFDVLGEHYSLAVLSGPTFAKELAAGMPTAISVASPDAQFVADLQEKIHCSKTFRVYANSDFTGMQLGGAVKNVIAIGAGMSDGIGFGANARTALITRGLAEMCRLGAALGAQPETFMGMAGLGDLVLTCTDNQSRNRRFGLALGQGKDVDTAQADIGQVVEGYRNTKEVWMLAQRMGVEMPIVDQIYQVLYQGKDARLAAQDLLARDKKSEGK.

NADPH contacts are provided by Ser23, Tyr24, His44, and Lys118. 3 residues coordinate sn-glycerol 3-phosphate: Lys118, Gly147, and Thr149. Position 151 (Ala151) interacts with NADPH. The sn-glycerol 3-phosphate site is built by Lys203, Asp256, Ser266, Arg267, and Asn268. Lys203 serves as the catalytic Proton acceptor. NADPH is bound at residue Arg267. Residues Val291 and Glu293 each contribute to the NADPH site.

This sequence belongs to the NAD-dependent glycerol-3-phosphate dehydrogenase family.

The protein resides in the cytoplasm. It carries out the reaction sn-glycerol 3-phosphate + NAD(+) = dihydroxyacetone phosphate + NADH + H(+). It catalyses the reaction sn-glycerol 3-phosphate + NADP(+) = dihydroxyacetone phosphate + NADPH + H(+). It functions in the pathway membrane lipid metabolism; glycerophospholipid metabolism. Its function is as follows. Catalyzes the reduction of the glycolytic intermediate dihydroxyacetone phosphate (DHAP) to sn-glycerol 3-phosphate (G3P), the key precursor for phospholipid synthesis. The polypeptide is Glycerol-3-phosphate dehydrogenase [NAD(P)+] (Vibrio vulnificus (strain CMCP6)).